A 139-amino-acid chain; its full sequence is Holo-[acyl-carrier-protein] synthase (139 aa).

2 residues coordinate Mg(2+): Asp8 and Glu57.

The protein belongs to the P-Pant transferase superfamily. AcpS family. It depends on Mg(2+) as a cofactor.

It localises to the cytoplasm. It carries out the reaction apo-[ACP] + CoA = holo-[ACP] + adenosine 3',5'-bisphosphate + H(+). Its function is as follows. Transfers the 4'-phosphopantetheine moiety from coenzyme A to a Ser of acyl-carrier-protein. The sequence is that of Holo-[acyl-carrier-protein] synthase from Sinorhizobium medicae (strain WSM419) (Ensifer medicae).